The chain runs to 216 residues: Pyrrolidone-carboxylate peptidase (216 aa).

Active-site residues include Glu80, Cys143, and His167.

It belongs to the peptidase C15 family. Homotetramer.

The protein resides in the cytoplasm. It carries out the reaction Release of an N-terminal pyroglutamyl group from a polypeptide, the second amino acid generally not being Pro.. Removes 5-oxoproline from various penultimate amino acid residues except L-proline. The polypeptide is Pyrrolidone-carboxylate peptidase (pcp) (Streptomyces coelicolor (strain ATCC BAA-471 / A3(2) / M145)).